The chain runs to 173 residues: MDIAIQHPWFKRALGPFYPSRLFDQFFGEGLFEYDLLPFLSSTISPYYRQSLFRTVLDSGISEVRSDRDKFVIFLDVKHFSPEDLTVKVLEDFVEIHGKHNERQDDHGYISREFHRRYRLPSNVDQSALSCSLSADGMLTFSGPKVPSGVDAGHSERAIPVSREEKPSSAPSS.

The residue at position 1 (methionine 1) is an N-acetylmethionine. The required for complex formation with BFSP1 and BFSP2 stretch occupies residues methionine 1–glutamate 63. At glutamine 6 the chain carries Deamidated glutamine; partial. Serine 45 bears the Phosphoserine mark. Glutamine 50 bears the Deamidated glutamine; partial mark. Positions leucine 52–serine 162 constitute a sHSP domain. N6-acetyllysine occurs at positions 70 and 99. Histidine 100 is a Zn(2+) binding site. Position 101 is a deamidated asparagine; partial (asparagine 101). Residues glutamate 102 and histidine 107 each coordinate Zn(2+). Serine 122 bears the Phosphoserine mark. Position 123 is a deamidated asparagine; partial (asparagine 123). The tract at residues proline 144–serine 173 is disordered. Basic and acidic residues predominate over residues glycine 153–proline 167. Position 154 (histidine 154) interacts with Zn(2+). O-linked (GlcNAc) serine glycosylation occurs at serine 162.

The protein belongs to the small heat shock protein (HSP20) family. As to quaternary structure, heteromer composed of three CRYAA and one CRYAB subunits. Inter-subunit bridging via zinc ions enhances stability, which is crucial as there is no protein turn over in the lens. Can also form homodimers and homotetramers (dimers of dimers) which serve as the building blocks of homooligomers. Within homooligomers, the zinc-binding motif is created from residues of 3 different molecules. His-100 and Glu-102 from one molecule are ligands of the zinc ion, and His-107 and His-154 residues from additional molecules complete the site with tetrahedral coordination geometry. Part of a complex required for lens intermediate filament formation composed of BFSP1, BFSP2 and CRYAA. Acetylation at Lys-70 may increase chaperone activity. In terms of processing, undergoes age-dependent proteolytical cleavage at the C-terminus.

The protein localises to the cytoplasm. Its subcellular location is the nucleus. Functionally, contributes to the transparency and refractive index of the lens. Acts as a chaperone, preventing aggregation of various proteins under a wide range of stress conditions. Required for the correct formation of lens intermediate filaments as part of a complex composed of BFSP1, BFSP2 and CRYAA. The sequence is that of Alpha-crystallin A chain (CRYAA) from Canis lupus familiaris (Dog).